A 588-amino-acid polypeptide reads, in one-letter code: MGEKNGVIIRVTGPVVEAEGMAGSRMYESVRVGNDGLIGEIIILEGDRATIQVYEETIGLTPGEPVVRTYLPLSVELGPGLIGTMYDGIQRPLEEILKNTGDMIERGSSAPALDRTKKYRFYPLAKSGDMVREGDRIGCVRESVSVNHYILIPPGLSGTIHFIAEQGEYVITDTIVILDTGEEKKELTMIQRWPVRDPRPVRERLDPVEPLLTGQRIIDTLFPLARGGTAAIPGPFGSGKTVVQQQLAKWVNADIIIYIGCGERGNEMADVLEQFPTLKDPRTGHALSSRMVLIANTSNMPVAAREASVYTGITIAEYYRDMGYHVALMADSTSRWAEAMREISGRLEEMPGEEGYPAYLSSRLADFYERAGRVSLLGSGDHEGSISVIGAVSPPGGDFSEPVTQNTLRIVKVFWALDADLAYQRHFPAINWLMSYSLYSPIAGIWWEEHIGPEFIRMKQEMMEILQRENELEEIIRLVGPETLPESDRLLLLKAEILRESYLMQYAFDEFDTFTGPKKQYRMLKAIFTFFSQAERALETGISVSRLRGLPVIESFARMGTASPEEEDPLFESIARDTDAIRDLKEVL.

ATP is bound at residue 234–241; it reads GPFGSGKT.

The protein belongs to the ATPase alpha/beta chains family. As to quaternary structure, has multiple subunits with at least A(3), B(3), C, D, E, F, H, I and proteolipid K(x).

The protein resides in the cell membrane. It catalyses the reaction ATP + H2O + 4 H(+)(in) = ADP + phosphate + 5 H(+)(out). Functionally, component of the A-type ATP synthase that produces ATP from ADP in the presence of a proton gradient across the membrane. The A chain is the catalytic subunit. This Methanospirillum hungatei JF-1 (strain ATCC 27890 / DSM 864 / NBRC 100397 / JF-1) protein is A-type ATP synthase subunit A 3.